The chain runs to 301 residues: D-psicose 3-epimerase (301 aa).

Tyrosine 16 provides a ligand contact to substrate. Glutamate 162 acts as the Proton donor/acceptor in catalysis. Residue glutamate 162 participates in Mn(2+) binding. Residues glutamate 168 and 195-198 each bind substrate; that span reads DTFH. Mn(2+) contacts are provided by aspartate 195 and histidine 221. Arginine 227 serves as a coordination point for substrate. The Proton donor/acceptor role is filled by glutamate 256. Mn(2+) is bound at residue glutamate 256.

It belongs to the hyi family. As to quaternary structure, homotetramer. Requires Mn(2+) as cofactor. The cofactor is Co(2+).

It carries out the reaction D-allulose = keto-D-fructose. Its activity is regulated as follows. Completely inhibited by EDTA and partially inhibited by Zn(2+), Mg(2+) and Cu(2+). In terms of biological role, involved in the biosynthesis of D-psicose. Catalyzes the reversible epimerization of D-fructose at the C3 position to yield D-psicose. The enzyme is highly specific for D-psicose and shows very low activity with D-tagatose. In Enterocloster bolteae (strain ATCC BAA-613 / DSM 15670 / CCUG 46953 / JCM 12243 / WAL 16351) (Clostridium bolteae), this protein is D-psicose 3-epimerase.